The primary structure comprises 297 residues: Streptogrisin-A (297 aa).

A signal peptide spans 1 to 38 (MTFKRFSPLSSTSRYARLLAVASGLVAAAALATPSAVA). Residues 39–115 (APEAESKATV…VKRAEGKFTP (77 aa)) constitute a propeptide that is removed on maturation. Cysteine 130 and cysteine 150 are oxidised to a cystine. Catalysis depends on charge relay system residues histidine 149, aspartate 171, and serine 253. Residues cysteine 247 and cysteine 274 are joined by a disulfide bond.

It belongs to the peptidase S1 family. Monomer.

The catalysed reaction is Hydrolysis of proteins with specificity similar to chymotrypsin.. In terms of biological role, has a primary specificity for large aliphatic or aromatic amino acids. The chain is Streptogrisin-A (sprA) from Streptomyces griseus.